The following is a 660-amino-acid chain: DNA mismatch repair protein MutL (660 aa).

This sequence belongs to the DNA mismatch repair MutL/HexB family.

Its function is as follows. This protein is involved in the repair of mismatches in DNA. It is required for dam-dependent methyl-directed DNA mismatch repair. May act as a 'molecular matchmaker', a protein that promotes the formation of a stable complex between two or more DNA-binding proteins in an ATP-dependent manner without itself being part of a final effector complex. The protein is DNA mismatch repair protein MutL of Streptococcus equi subsp. zooepidemicus (strain H70).